A 361-amino-acid chain; its full sequence is 5-formaminoimidazole-4-carboxamide-1-(beta)-D-ribofuranosyl 5'-monophosphate synthetase (361 aa).

His27 and Ser94 together coordinate 5-amino-1-(5-phospho-beta-D-ribosyl)imidazole-4-carboxamide. The 233-residue stretch at 116–348 (RAILRWEAER…MGQRIAKEIK (233 aa)) folds into the ATP-grasp domain. ATP is bound by residues 146–208 (PDDI…ANYC) and Glu230. Residue Asn258 coordinates 5-amino-1-(5-phospho-beta-D-ribosyl)imidazole-4-carboxamide. Mg(2+) is bound by residues Gln297 and Glu310.

It belongs to the phosphohexose mutase family. The cofactor is Mg(2+). It depends on Mn(2+) as a cofactor.

It catalyses the reaction 5-amino-1-(5-phospho-beta-D-ribosyl)imidazole-4-carboxamide + formate + ATP = 5-formamido-1-(5-phospho-D-ribosyl)imidazole-4-carboxamide + ADP + phosphate. It participates in purine metabolism; IMP biosynthesis via de novo pathway; 5-formamido-1-(5-phospho-D-ribosyl)imidazole-4-carboxamide from 5-amino-1-(5-phospho-D-ribosyl)imidazole-4-carboxamide (formate route): step 1/1. In terms of biological role, catalyzes the ATP- and formate-dependent formylation of 5-aminoimidazole-4-carboxamide-1-beta-d-ribofuranosyl 5'-monophosphate (AICAR) to 5-formaminoimidazole-4-carboxamide-1-beta-d-ribofuranosyl 5'-monophosphate (FAICAR) in the absence of folates. In Methanococcus maripaludis (strain C6 / ATCC BAA-1332), this protein is 5-formaminoimidazole-4-carboxamide-1-(beta)-D-ribofuranosyl 5'-monophosphate synthetase.